Reading from the N-terminus, the 174-residue chain is MMSIKLTLCALIFFLLNSLLHHVLGHDNQLNTTSSWLKSHIKAATTTNWGRPKPPMCKPWICKRSGPSEARMRCCRNQCVDVLSDPNHCRFCFKSCRFALSCCDGDCVDTNTDPSNCGQCGNECESGAPCEFGMCGYAAPSSQPGKRHRRHKFHRPRPPPSPDSKLNYDDHDDE.

Residues 1-25 (MMSIKLTLCALIFFLLNSLLHHVLG) form the signal peptide. The disordered stretch occupies residues 140–174 (PSSQPGKRHRRHKFHRPRPPPSPDSKLNYDDHDDE). A compositionally biased stretch (basic residues) spans 145-157 (GKRHRRHKFHRPR).

It belongs to the STIG1 family.

It localises to the secreted. Endosperm-specific cysteine-rich protein that acts downstream of BHLH95/ZOU to modify the interface between embryo and endosperm and mediate the separation of these two tissues during seed development. Necessary for the biogenesis of the embryo sheath, an extracuticular endosperm-derived structure at the surface of the embryo. Required for the separation of embryo and endosperm, and for normal progression of the embryo through the endosperm tissue. Required for the formation of a normal embryonic cuticle. This is Stigma-specific STIG1-like protein 4 from Arabidopsis thaliana (Mouse-ear cress).